The following is a 316-amino-acid chain: L-lactate dehydrogenase (316 aa).

NAD(+) contacts are provided by residues 13–15, 34–36, Y67, and 79–83; these read GMI, FDI, and TAGFT. R95 provides a ligand contact to substrate. NAD(+) contacts are provided by residues 125 to 127, L150, and L154; that span reads VTN. Substrate-binding residues include R158 and H182. H182 is an NAD(+) binding site. Catalysis depends on H182, which acts as the Proton acceptor.

The protein belongs to the LDH/MDH superfamily. LDH family. Homotetramer.

It catalyses the reaction (S)-lactate + NAD(+) = pyruvate + NADH + H(+). The protein operates within fermentation; pyruvate fermentation to lactate; (S)-lactate from pyruvate: step 1/1. The sequence is that of L-lactate dehydrogenase from Plasmodium berghei.